Consider the following 103-residue polypeptide: Pyrimidine/purine nucleoside phosphorylase (103 aa).

This sequence belongs to the nucleoside phosphorylase PpnP family.

It carries out the reaction a purine D-ribonucleoside + phosphate = a purine nucleobase + alpha-D-ribose 1-phosphate. The enzyme catalyses adenosine + phosphate = alpha-D-ribose 1-phosphate + adenine. It catalyses the reaction cytidine + phosphate = cytosine + alpha-D-ribose 1-phosphate. The catalysed reaction is guanosine + phosphate = alpha-D-ribose 1-phosphate + guanine. It carries out the reaction inosine + phosphate = alpha-D-ribose 1-phosphate + hypoxanthine. The enzyme catalyses thymidine + phosphate = 2-deoxy-alpha-D-ribose 1-phosphate + thymine. It catalyses the reaction uridine + phosphate = alpha-D-ribose 1-phosphate + uracil. The catalysed reaction is xanthosine + phosphate = alpha-D-ribose 1-phosphate + xanthine. Catalyzes the phosphorolysis of diverse nucleosides, yielding D-ribose 1-phosphate and the respective free bases. Can use uridine, adenosine, guanosine, cytidine, thymidine, inosine and xanthosine as substrates. Also catalyzes the reverse reactions. This chain is Pyrimidine/purine nucleoside phosphorylase, found in Shewanella baltica (strain OS195).